We begin with the raw amino-acid sequence, 289 residues long: Serine/threonine-protein phosphatase Pgam5, mitochondrial (289 aa).

The chain crosses the membrane as a helical span at residues 7-23; that stretch reads FACGTGAGLLTFYLTKL.

Belongs to the phosphoglycerate mutase family. BPG-dependent PGAM subfamily. In terms of assembly, interacts with Pk92B/ASK1.

It localises to the mitochondrion outer membrane. It carries out the reaction O-phospho-L-seryl-[protein] + H2O = L-seryl-[protein] + phosphate. It catalyses the reaction O-phospho-L-threonyl-[protein] + H2O = L-threonyl-[protein] + phosphate. Its function is as follows. Displays phosphatase activity for serine/threonine residues, and dephosphorylates and activates Pk92B kinase. Has apparently no phosphoglycerate mutase activity. The protein is Serine/threonine-protein phosphatase Pgam5, mitochondrial of Drosophila persimilis (Fruit fly).